Reading from the N-terminus, the 227-residue chain is Isopentenyl-diphosphate Delta-isomerase 1 (227 aa).

Lys-36 is a substrate binding site. Residues His-40 and His-51 each coordinate Mg(2+). The region spanning 49–199 (LLHRAFSVFL…EIKITPWFKI (151 aa)) is the Nudix hydrolase domain. Arg-70 and Lys-74 together coordinate substrate. Residue Cys-86 is part of the active site. Position 87 (Ser-87) interacts with substrate. Mg(2+) is bound by residues Glu-146 and Glu-148. Glu-148 is an active-site residue. Residue Lys-176 is modified to N6-acetyllysine. Residues 225–227 (YRI) carry the Microbody targeting signal motif.

Belongs to the IPP isomerase type 1 family. Monomer. Requires Mg(2+) as cofactor.

The protein localises to the peroxisome. It carries out the reaction isopentenyl diphosphate = dimethylallyl diphosphate. Its pathway is isoprenoid biosynthesis; dimethylallyl diphosphate biosynthesis; dimethylallyl diphosphate from isopentenyl diphosphate: step 1/1. In terms of biological role, catalyzes the 1,3-allylic rearrangement of the homoallylic substrate isopentenyl (IPP) to its highly electrophilic allylic isomer, dimethylallyl diphosphate (DMAPP). The polypeptide is Isopentenyl-diphosphate Delta-isomerase 1 (IDI1) (Pongo abelii (Sumatran orangutan)).